The chain runs to 199 residues: Chaperone protein TorD (199 aa).

The protein belongs to the TorD/DmsD family. TorD subfamily.

Its subcellular location is the cytoplasm. Involved in the biogenesis of TorA. Acts on TorA before the insertion of the molybdenum cofactor and, as a result, probably favors a conformation of the apoenzyme that is competent for acquiring the cofactor. The protein is Chaperone protein TorD of Escherichia coli (strain ATCC 8739 / DSM 1576 / NBRC 3972 / NCIMB 8545 / WDCM 00012 / Crooks).